The chain runs to 150 residues: Ribosome maturation factor RimP (150 aa).

The protein belongs to the RimP family.

It is found in the cytoplasm. Its function is as follows. Required for maturation of 30S ribosomal subunits. In Acidithiobacillus ferrooxidans (strain ATCC 23270 / DSM 14882 / CIP 104768 / NCIMB 8455) (Ferrobacillus ferrooxidans (strain ATCC 23270)), this protein is Ribosome maturation factor RimP.